Consider the following 669-residue polypeptide: DNA ligase (669 aa).

NAD(+) is bound by residues 33–37, 82–83, and Glu-115; these read DVTYD and SL. The active-site N6-AMP-lysine intermediate is Lys-117. NAD(+)-binding residues include Arg-138, Glu-172, Lys-286, and Lys-310. Zn(2+)-binding residues include Cys-401, Cys-404, Cys-417, and Cys-422. The BRCT domain occupies 589-669; sequence IDSSFLFGKK…DIKNLVNLDD (81 aa).

This sequence belongs to the NAD-dependent DNA ligase family. LigA subfamily. Mg(2+) is required as a cofactor. Mn(2+) serves as cofactor.

It catalyses the reaction NAD(+) + (deoxyribonucleotide)n-3'-hydroxyl + 5'-phospho-(deoxyribonucleotide)m = (deoxyribonucleotide)n+m + AMP + beta-nicotinamide D-nucleotide.. DNA ligase that catalyzes the formation of phosphodiester linkages between 5'-phosphoryl and 3'-hydroxyl groups in double-stranded DNA using NAD as a coenzyme and as the energy source for the reaction. It is essential for DNA replication and repair of damaged DNA. This is DNA ligase from Borrelia recurrentis (strain A1).